The primary structure comprises 176 residues: Cystatin-related protein 2 (176 aa).

An N-terminal signal peptide occupies residues 1–26; that stretch reads MYKTLCGTQLLLAIFVLFLNFSHATA. A propeptide spanning residues 27–30 is cleaved from the precursor; the sequence is KGTR. The N-linked (GlcNAc...) asparagine glycan is linked to Asn71. Cystine bridges form between Cys129–Cys139 and Cys153–Cys173.

It belongs to the cystatin family. Prostate.

This Rattus norvegicus (Rat) protein is Cystatin-related protein 2 (Crp2).